The chain runs to 153 residues: Cell division protein SepF (153 aa).

It belongs to the SepF family. Homodimer. Interacts with FtsZ.

It is found in the cytoplasm. Its function is as follows. Cell division protein that is part of the divisome complex and is recruited early to the Z-ring. Probably stimulates Z-ring formation, perhaps through the cross-linking of FtsZ protofilaments. Its function overlaps with FtsA. This Clostridium tetani (strain Massachusetts / E88) protein is Cell division protein SepF.